Consider the following 151-residue polypeptide: uncharacterized protein (151 aa).

This is an uncharacterized protein from Lepidoptera (butterflies and moths).